The primary structure comprises 70 residues: Cytochrome c oxidase subunit 8B, mitochondrial (70 aa).

The N-terminal 24 residues, 1–24, are a transit peptide targeting the mitochondrion; that stretch reads MLRLAPTVRLLQAPLRGWAVPKAH. The Mitochondrial matrix segment spans residues 25-35; sequence ITAKPAKTPTS. The helical transmembrane segment at 36-59 threads the bilayer; that stretch reads PKEQAIGLSVTFLSFLLPAGWVLY. Residues 60-70 lie on the Mitochondrial intermembrane side of the membrane; sequence HLDNYKKSSAA.

It belongs to the cytochrome c oxidase VIII family. Component of the cytochrome c oxidase (complex IV, CIV), a multisubunit enzyme composed of 14 subunits. The complex is composed of a catalytic core of 3 subunits MT-CO1, MT-CO2 and MT-CO3, encoded in the mitochondrial DNA, and 11 supernumerary subunits COX4I1 (or COX4I2), COX5A, COX5B, COX6A2 (or COX6A1), COX6B1 (or COX6B2), COX6C, COX7A1 (or COX7A2), COX7B, COX7C, COX8B and NDUFA4, which are encoded in the nuclear genome. The complex exists as a monomer or a dimer and forms supercomplexes (SCs) in the inner mitochondrial membrane with NADH-ubiquinone oxidoreductase (complex I, CI) and ubiquinol-cytochrome c oxidoreductase (cytochrome b-c1 complex, complex III, CIII), resulting in different assemblies (supercomplex SCI(1)III(2)IV(1) and megacomplex MCI(2)III(2)IV(2)).

The protein resides in the mitochondrion inner membrane. It participates in energy metabolism; oxidative phosphorylation. Its function is as follows. Component of the cytochrome c oxidase, the last enzyme in the mitochondrial electron transport chain which drives oxidative phosphorylation. The respiratory chain contains 3 multisubunit complexes succinate dehydrogenase (complex II, CII), ubiquinol-cytochrome c oxidoreductase (cytochrome b-c1 complex, complex III, CIII) and cytochrome c oxidase (complex IV, CIV), that cooperate to transfer electrons derived from NADH and succinate to molecular oxygen, creating an electrochemical gradient over the inner membrane that drives transmembrane transport and the ATP synthase. Cytochrome c oxidase is the component of the respiratory chain that catalyzes the reduction of oxygen to water. Electrons originating from reduced cytochrome c in the intermembrane space (IMS) are transferred via the dinuclear copper A center (CU(A)) of subunit 2 and heme A of subunit 1 to the active site in subunit 1, a binuclear center (BNC) formed by heme A3 and copper B (CU(B)). The BNC reduces molecular oxygen to 2 water molecules using 4 electrons from cytochrome c in the IMS and 4 protons from the mitochondrial matrix. The chain is Cytochrome c oxidase subunit 8B, mitochondrial (COX8B) from Bos taurus (Bovine).